Consider the following 222-residue polypeptide: Peptide methionine sulfoxide reductase MsrA (222 aa).

The active site involves C55.

The protein belongs to the MsrA Met sulfoxide reductase family.

It carries out the reaction L-methionyl-[protein] + [thioredoxin]-disulfide + H2O = L-methionyl-(S)-S-oxide-[protein] + [thioredoxin]-dithiol. The enzyme catalyses [thioredoxin]-disulfide + L-methionine + H2O = L-methionine (S)-S-oxide + [thioredoxin]-dithiol. In terms of biological role, has an important function as a repair enzyme for proteins that have been inactivated by oxidation. Catalyzes the reversible oxidation-reduction of methionine sulfoxide in proteins to methionine. This chain is Peptide methionine sulfoxide reductase MsrA, found in Streptomyces griseus subsp. griseus (strain JCM 4626 / CBS 651.72 / NBRC 13350 / KCC S-0626 / ISP 5235).